Consider the following 118-residue polypeptide: IgW heavy chain V region W26 (118 aa).

In terms of domain architecture, Ig-like spans 1 to 109 (NIVLTQPESA…PQWGYWGSGT (109 aa)). A disulfide bridge connects residues Cys-22 and Cys-93.

In terms of tissue distribution, expressed mainly in lymphoid tissues including spleen, epigonal organ and circulating lymphocytes.

The polypeptide is IgW heavy chain V region W26 (Heterodontus francisci (Horn shark)).